The sequence spans 1486 residues: Glutamate synthase [NADPH] large chain (1486 aa).

The propeptide occupies 1–11 (MLYDKSLERDN). Cys-12 serves as the catalytic Nucleophile. The region spanning 12 to 402 (CGFGLIAHIE…PGELMVIDTR (391 aa)) is the Glutamine amidotransferase type-2 domain. FMN is bound at residue 1049–1101 (LVETQQALVANGLRHKIRLQVDGGLKTGVDIIKAAILGAESFGFGTGPMVALG). The [3Fe-4S] cluster site is built by Cys-1102, Cys-1108, and Cys-1113.

Belongs to the glutamate synthase family. Aggregate of 4 catalytic active heterodimers, consisting of a large and a small subunit. Requires [3Fe-4S] cluster as cofactor. It depends on FAD as a cofactor. FMN serves as cofactor.

It carries out the reaction 2 L-glutamate + NADP(+) = L-glutamine + 2-oxoglutarate + NADPH + H(+). It participates in amino-acid biosynthesis; L-glutamate biosynthesis via GLT pathway; L-glutamate from 2-oxoglutarate and L-glutamine (NADP(+) route): step 1/1. Its pathway is energy metabolism; nitrogen metabolism. Catalyzes the conversion of L-glutamine and 2-oxoglutarate into two molecules of L-glutamate. The chain is Glutamate synthase [NADPH] large chain (gltB) from Escherichia coli (strain K12).